Reading from the N-terminus, the 567-residue chain is DNA ligase B (567 aa).

The N6-AMP-lysine intermediate role is filled by lysine 132.

The protein belongs to the NAD-dependent DNA ligase family. LigB subfamily.

It catalyses the reaction NAD(+) + (deoxyribonucleotide)n-3'-hydroxyl + 5'-phospho-(deoxyribonucleotide)m = (deoxyribonucleotide)n+m + AMP + beta-nicotinamide D-nucleotide.. Catalyzes the formation of phosphodiester linkages between 5'-phosphoryl and 3'-hydroxyl groups in double-stranded DNA using NAD as a coenzyme and as the energy source for the reaction. The chain is DNA ligase B from Yersinia pseudotuberculosis serotype O:1b (strain IP 31758).